The primary structure comprises 212 residues: Large ribosomal subunit protein uL1 (212 aa).

The protein belongs to the universal ribosomal protein uL1 family. Part of the 50S ribosomal subunit.

Its function is as follows. Binds directly to 23S rRNA. Probably involved in E site tRNA release. In terms of biological role, protein L1 is also a translational repressor protein, it controls the translation of its operon by binding to its mRNA. The sequence is that of Large ribosomal subunit protein uL1 from Haloquadratum walsbyi (strain DSM 16790 / HBSQ001).